Here is a 438-residue protein sequence, read N- to C-terminus: Trigger factor (438 aa).

Residues 160-245 (DDKVTIDFVG…VKKIQQAELP (86 aa)) enclose the PPIase FKBP-type domain.

The protein belongs to the FKBP-type PPIase family. Tig subfamily.

Its subcellular location is the cytoplasm. The enzyme catalyses [protein]-peptidylproline (omega=180) = [protein]-peptidylproline (omega=0). Functionally, involved in protein export. Acts as a chaperone by maintaining the newly synthesized protein in an open conformation. Functions as a peptidyl-prolyl cis-trans isomerase. In Francisella tularensis subsp. novicida (strain U112), this protein is Trigger factor.